The sequence spans 137 residues: Large ribosomal subunit protein uL16 (137 aa).

A disordered region spans residues 1–20 (MLQPKRTKFRKQQKMRNRGL).

Belongs to the universal ribosomal protein uL16 family. In terms of assembly, part of the 50S ribosomal subunit.

In terms of biological role, binds 23S rRNA and is also seen to make contacts with the A and possibly P site tRNAs. The sequence is that of Large ribosomal subunit protein uL16 from Francisella philomiragia subsp. philomiragia (strain ATCC 25017 / CCUG 19701 / FSC 153 / O#319-036).